The chain runs to 132 residues: Large ribosomal subunit protein bL17 (132 aa).

It belongs to the bacterial ribosomal protein bL17 family. As to quaternary structure, part of the 50S ribosomal subunit. Contacts protein L32.

This chain is Large ribosomal subunit protein bL17, found in Saccharophagus degradans (strain 2-40 / ATCC 43961 / DSM 17024).